A 187-amino-acid chain; its full sequence is Oligoribonuclease (187 aa).

Residues 7–170 (LCWLDMEMTG…DDILESIEEM (164 aa)) enclose the Exonuclease domain. Residue Y128 is part of the active site.

Belongs to the oligoribonuclease family.

The protein localises to the cytoplasm. Functionally, 3'-to-5' exoribonuclease specific for small oligoribonucleotides. The sequence is that of Oligoribonuclease from Neisseria meningitidis serogroup A / serotype 4A (strain DSM 15465 / Z2491).